Consider the following 1754-residue polypeptide: Collagen alpha-1(XVIII) chain (1754 aa).

The signal sequence occupies residues 1–23; the sequence is MAPYPCGCHILLLLFCCLAAARA. The segment at 42–104 is disordered; that stretch reads ATTIPEPQGP…TSAESPDAPE (63 aa). The span at 57-73 shows a compositional bias: polar residues; it reads TADTTTHVTPRNGSTEP. Residues asparagine 68, asparagine 129, and asparagine 164 are each glycosylated (N-linked (GlcNAc...) asparagine). The disordered stretch occupies residues 152 to 256; it reads LALAGPSSTP…APSQQLQRPD (105 aa). Residues 157 to 169 are compositionally biased toward polar residues; it reads PSSTPQENGTTLW. A compositionally biased stretch (low complexity) spans 215-253; the sequence is SGRASLSSLLGGAPPWGSLQDPDSQGLSPAAAAPSQQLQ. In terms of domain architecture, FZ spans 329–446; the sequence is APAGRCLPLP…TQEDGYCVLI (118 aa). Disulfide bonds link cysteine 334–cysteine 397, cysteine 344–cysteine 390, cysteine 381–cysteine 419, cysteine 408–cysteine 443, and cysteine 412–cysteine 432. The region spanning 456 to 644 is the Laminin G-like domain; that stretch reads EVGLLQLLGD…IAELKVRRDP (189 aa). The nonhelical region 1 (NC1) stretch occupies residues 645–751; the sequence is QVSPMHCLDE…RTPGGRVKEG (107 aa). The interval 645 to 1443 is disordered; sequence QVSPMHCLDE…GPPGTMGASS (799 aa). A compositionally biased stretch (basic and acidic residues) spans 672–681; the sequence is DARELLREET. At threonine 696 the chain carries Phosphothreonine. Polar residues predominate over residues 717–738; it reads QTTVASLGAQTLPGSDSVSTWD. A triple-helical region 1 (COL1) region spans residues 752–785; it reads GLKGQKGEPGVPGPPGRAGPPGSPCLPGPPGLPC. Residues 762–789 are compositionally biased toward pro residues; it reads VPGPPGRAGPPGSPCLPGPPGLPCPVSP. Positions 786-795 are nonhelical region 2 (NC2); sequence PVSPLGPAGP. A triple-helical region 2 (COL2) region spans residues 796-875; sequence ALQTVPGPQG…QGPPGPPGPS (80 aa). The segment covering 815–831 has biased composition (basic and acidic residues); sequence TPGRDGEPGDPGEDGKP. The segment covering 833 to 846 has biased composition (low complexity); it reads DTGPQGFPGTPGDV. A compositionally biased stretch (pro residues) spans 862 to 874; the sequence is PPGPQGPPGPPGP. The interval 876–899 is nonhelical region 3 (NC3); it reads FRHDKLTFIDMEGSGFGGDLEALR. Residue serine 889 is glycosylated (O-linked (Xyl...) (chondroitin sulfate) serine). The tract at residues 900–1021 is triple-helical region 3 (COL3); that stretch reads GPRGFPGPPG…PGPPGPPGPG (122 aa). A compositionally biased stretch (pro residues) spans 904-914; sequence FPGPPGPPGVP. Asparagine 926 carries N-linked (GlcNAc...) asparagine glycosylation. A compositionally biased stretch (low complexity) spans 930 to 942; that stretch reads VPGPAGLPGVPGR. Positions 946-961 are enriched in pro residues; the sequence is PGFPGLPGPPGPPGRE. The segment covering 976 to 1003 has biased composition (low complexity); sequence AGAPGHKGSKGAPGPAGARGESGLAGAP. The segment covering 1005 to 1021 has biased composition (pro residues); the sequence is PAGPPGPPGPPGPPGPG. Residues 1022–1044 are nonhelical region 4 (NC4); sequence LPAGFDDMEGSGGPFWSTARSAD. A triple-helical region 4 (COL4) region spans residues 1045–1127; sequence GPQGPPGLPG…PGPPGPPGPV (83 aa). Positions 1053 to 1065 are enriched in low complexity; that stretch reads PGLKGDPGVPGLP. Positions 1095-1109 are enriched in basic and acidic residues; it reads KGDRGSRGEKGDPGK. The segment covering 1117–1126 has biased composition (pro residues); the sequence is LPGPPGPPGP. The tract at residues 1128 to 1141 is nonhelical region 5 (NC5); it reads VYVSEQDGSVLSVP. Positions 1141-1153 are enriched in low complexity; that stretch reads PGPEGRPGFAGFP. The interval 1142 to 1183 is triple-helical region 5 (COL5); that stretch reads GPEGRPGFAGFPGPAGPKGNLGSKGERGSPGPKGEKGEPGSI. The interval 1184-1196 is nonhelical region 6 (NC6); the sequence is FSPDGGALGPAQK. Positions 1197–1269 are triple-helical region 6 (COL6); that stretch reads GAKGEPGFRG…PGPPGPPGTP (73 aa). Residues 1254–1268 are compositionally biased toward pro residues; sequence PGPPGPPGPPGPPGT. The segment at 1270-1279 is nonhelical region 7 (NC7); the sequence is VYDSNVFAES. Residues 1280 to 1312 form a triple-helical region 7 (COL7) region; it reads SRPGPPGLPGNQGPPGPKGAKGEVGPPGPPGQF. Over residues 1282 to 1296 the composition is skewed to pro residues; the sequence is PGPPGLPGNQGPPGP. The nonhelical region 8 (NC8) stretch occupies residues 1313–1324; sequence PFDFLQLEAEMK. Positions 1321–1341 are enriched in basic and acidic residues; it reads AEMKGEKGDRGDAGQKGERGE. Residues 1325-1346 are triple-helical region 8 (COL8); the sequence is GEKGDRGDAGQKGERGEPGGGG. The Cell attachment site motif lies at 1330–1332; it reads RGD. The tract at residues 1347 to 1353 is nonhelical region 9 (NC9); sequence FFGSSLP. Composition is skewed to pro residues over residues 1353–1365, 1401–1414, and 1424–1436; these read PGPP…PGPR, PPGP…PSFP, and PGPP…PGPP. A triple-helical region 9 (COL9) region spans residues 1354 to 1411; that stretch reads GPPGPPGPPGPRGYPGIPGPKGESIRGQPGPPGPQGPPGIGYEGRQGPPGPPGPPGPP. The tract at residues 1412-1424 is nonhelical region 10 (NC10); sequence SFPGPHRQTISVP. The segment at 1425–1442 is triple-helical region 10 (COL10); that stretch reads GPPGPPGPPGPPGTMGAS. The nonhelical region 11 (NC11) stretch occupies residues 1443-1754; the sequence is SGVRLWATRQ…IENSFMTASK (312 aa). The interval 1456 to 1501 is non-collagenous domain 1 association domain; sequence GQVHEVPEGWLIFVAEQEELYVRVQNGFRKVQLEARTPLPRGTDNE. The segment at 1502–1571 is non-collagenous domain 1 hinge region; the sequence is VAALQPPVVQ…RPARPTSPPA (70 aa). The disordered stretch occupies residues 1511 to 1556; it reads QLHDSNPYPRREHPHPTARPWRADDILASPPRLPEPQPYPGAPHHS. A compositionally biased stretch (basic and acidic residues) spans 1519–1535; sequence PRREHPHPTARPWRADD. Positions 1541-1551 are enriched in pro residues; sequence PRLPEPQPYPG. O-linked (GalNAc...) threonine glycosylation is present at threonine 1567. Histidine 1572, histidine 1574, histidine 1582, and aspartate 1647 together coordinate Zn(2+). Intrachain disulfides connect cysteine 1604–cysteine 1744 and cysteine 1706–cysteine 1736.

The protein belongs to the multiplexin collagen family. As to quaternary structure, forms homotrimers. Recombinant non-collagenous domain 1 has stronger affinity to NID1, HSPG2 and laminin-1:NID1 complex and lower affinity to FBLN1 and FBLN2 than endostatin. Monomeric. Interacts with KDR/VEGFR2. Interacts with the ITGA5:ITGB1 complex. Interacts with NID1, HSPG2, laminin-1:NID1 complex, FBLN1 and FBLN2. In terms of processing, prolines at the third position of the tripeptide repeating unit (G-X-Y) of the triple-helical regions are hydroxylated. Circulating endostatins are found as sialoglycoprotein and asialoglycoprotein structures. Post-translationally, undergoes proteolytic processing by CTSL/cathepsin-L and elastase-like proteases to generate both non-collagenous domain 1 trimers and endostatin monomers. In tissue extracts (brain, skeletal muscle, heart, kidney, testis and liver) predominantly bands of approximately 38 kDa are detected; recombinant non-collagenous domain 1 shows similar mobility. In vitro, several proteolytic cleavage sites in the non-collagenous domain 1 hinge region generating different endostatin-like peptides are reported. Detected in placenta (at protein level). Present in multiple organs with highest levels in liver, lung and kidney.

The protein resides in the secreted. It is found in the extracellular space. The protein localises to the extracellular matrix. It localises to the basement membrane. In terms of biological role, probably plays a major role in determining the retinal structure as well as in the closure of the neural tube. May regulate extracellular matrix-dependent motility and morphogenesis of endothelial and non-endothelial cells; the function requires homotrimerization and implicates MAPK signaling. Functionally, potently inhibits endothelial cell proliferation and angiogenesis. May inhibit angiogenesis by binding to the heparan sulfate proteoglycans involved in growth factor signaling. Inhibits VEGFA-induced endothelial cell proliferation and migration. Seems to inhibit VEGFA-mediated signaling by blocking the interaction of VEGFA to its receptor KDR/VEGFR2. Modulates endothelial cell migration in an integrin-dependent manner implicating integrin ITGA5:ITGB1 and to a lesser extent ITGAV:ITGB3 and ITGAV:ITGB5. May negatively regulate the activity of homotrimeric non-collagenous domain 1. The sequence is that of Collagen alpha-1(XVIII) chain from Homo sapiens (Human).